Here is a 146-residue protein sequence, read N- to C-terminus: MMSGDYLVIDKRVLPDVYEKVLFAKKLLKDGKVKEITEAVKIAGISRSVYYKYRDFVFDFAETSEGRKVTYNIIFKNEKGLLSNISNYITEKGGDILTINQGIPLNGYANLSITIDLSTVDGDIKTLTEGLLNIRNVEKVEFIGME.

The ACT domain occupies 70 to 145 (TYNIIFKNEK…NVEKVEFIGM (76 aa)).

This sequence belongs to the UPF0735 family.

This chain is UPF0735 ACT domain-containing protein Cbei_1295, found in Clostridium beijerinckii (strain ATCC 51743 / NCIMB 8052) (Clostridium acetobutylicum).